The primary structure comprises 156 residues: MAREVKLTKAGYERLMQQLERERERLQEATKILQELMESSDDYDDSGLEAAKQEKARIEARIDSLEDILSRAVILEEGSGEVIGLGSVVELEDPLSGERLSVQVVSPAEANVLDTPMKISDASPMGKALLGHRVGDVLSLDTPKGKREFRVVAIHG.

Residues 1-74 (MAREVKLTKA…LEDILSRAVI (74 aa)) are a coiled coil.

This sequence belongs to the GreA/GreB family. As to quaternary structure, interacts with RNAP.

Its function is as follows. Inhibits all catalytic activities of RNA polymerase (RNAP) by partially occluding its substrate-binding site and preventing NTP binding. The protein is Transcription inhibitor protein Gfh1 (gfh1) of Thermus thermophilus (strain ATCC BAA-163 / DSM 7039 / HB27).